The primary structure comprises 611 residues: Dual specificity protein phosphatase CDC14AB (611 aa).

The a stretch occupies residues 23-178; the sequence is DLLGASEFIK…ALQHGFLNFE (156 aa). The tract at residues 179-192 is linker; that stretch reads TFDVNEYEHYERVE. A b region spans residues 193-359; the sequence is NGDLNWITPG…HGDSLRSKQR (167 aa). The Tyrosine-protein phosphatase domain maps to 194–352; sequence GDLNWITPGK…KQASLWAHGD (159 aa). The active-site Phosphocysteine intermediate is the cysteine 294. Residues 408–611 are disordered; it reads KLRALKGRRQ…PSLQSEYVQY (204 aa). A compositionally biased stretch (low complexity) spans 456-490; that stretch reads SPLKSSKVPASSSSSSSSSSVSASAKRIGRSSSSS. The segment covering 491-511 has biased composition (polar residues); the sequence is TNLKSTRLASSLGNLYEPNTE. A compositionally biased stretch (low complexity) spans 512–553; the sequence is SISSGKPPSPSSFTPHPVRTTYNYHYEVNNNNNQYSTTSSPS. Polar residues-rich tracts occupy residues 554–569 and 591–611; these read KSLG…SGAS and GLST…YVQY.

It belongs to the protein-tyrosine phosphatase family. Non-receptor class CDC14 subfamily.

The protein resides in the nucleus. It is found in the cytoplasm. The protein localises to the cytoskeleton. It localises to the microtubule organizing center. Its subcellular location is the centrosome. The protein resides in the spindle pole. It is found in the spindle. The protein localises to the cell projection. It localises to the kinocilium. The catalysed reaction is O-phospho-L-tyrosyl-[protein] + H2O = L-tyrosyl-[protein] + phosphate. It carries out the reaction O-phospho-L-seryl-[protein] + H2O = L-seryl-[protein] + phosphate. It catalyses the reaction O-phospho-L-threonyl-[protein] + H2O = L-threonyl-[protein] + phosphate. Its function is as follows. Dual-specificity phosphatase. Required for centrosome separation and productive cytokinesis during cell division. Dephosphorylates SIRT2 around early anaphase. May dephosphorylate the APC subunit FZR1/CDH1, thereby promoting APC-FZR1 dependent degradation of mitotic cyclins and subsequent exit from mitosis. This chain is Dual specificity protein phosphatase CDC14AB (cdc14ab), found in Danio rerio (Zebrafish).